Here is a 319-residue protein sequence, read N- to C-terminus: Malate dehydrogenase (319 aa).

NAD(+) contacts are provided by residues 10-15 and Asp34; that span reads GAGNIG. Residues Arg83 and Arg89 each contribute to the substrate site. Residues Asn96 and 119-121 contribute to the NAD(+) site; that span reads ITN. Substrate is bound by residues Asn121 and Arg152. His176 acts as the Proton acceptor in catalysis.

The protein belongs to the LDH/MDH superfamily. MDH type 3 family.

It catalyses the reaction (S)-malate + NAD(+) = oxaloacetate + NADH + H(+). Catalyzes the reversible oxidation of malate to oxaloacetate. The polypeptide is Malate dehydrogenase (Francisella tularensis subsp. holarctica (strain FTNF002-00 / FTA)).